The sequence spans 198 residues: 3-isopropylmalate dehydratase small subunit (198 aa).

This sequence belongs to the LeuD family. LeuD type 1 subfamily. Heterodimer of LeuC and LeuD.

The enzyme catalyses (2R,3S)-3-isopropylmalate = (2S)-2-isopropylmalate. The protein operates within amino-acid biosynthesis; L-leucine biosynthesis; L-leucine from 3-methyl-2-oxobutanoate: step 2/4. Functionally, catalyzes the isomerization between 2-isopropylmalate and 3-isopropylmalate, via the formation of 2-isopropylmaleate. The protein is 3-isopropylmalate dehydratase small subunit of Corynebacterium jeikeium (strain K411).